The sequence spans 395 residues: Protein UNIFOLIATA (395 aa).

Disordered regions lie at residues 147 to 170 (SQEGLSEEPVVQREKEAMGSGGGS) and 185 to 223 (QIRRRRMKMKGNDHGENEEGEEEEEDNISGGGVGGGERQ). The span at 202–211 (EEGEEEEEDN) shows a compositional bias: acidic residues. 3 consecutive DNA-binding regions follow at residues 224–228 (REHPF), 293–300 (NKPKMRHY), and 364–367 (YGPT).

This sequence belongs to the FLO/LFY family. Highly expressed in leaf, leaflet, inflorescence and lateral shoot primordia on the main shoot axis, and in floral organ and carpel primordia.

It localises to the nucleus. Its function is as follows. May regulate indeterminacy during leaf and flower development. This is Protein UNIFOLIATA (UNI) from Pisum sativum (Garden pea).